Here is a 304-residue protein sequence, read N- to C-terminus: Lipoyl synthase (304 aa).

The disordered stretch occupies residues 1-21 (MAPELIQIDLEPRKPAPKPSW). Residues Cys48, Cys53, Cys59, Cys74, Cys78, Cys81, and Ser287 each coordinate [4Fe-4S] cluster. Residues 60–276 (WNHKTATFML…KEEAMKMGFR (217 aa)) enclose the Radical SAM core domain.

It belongs to the radical SAM superfamily. Lipoyl synthase family. The cofactor is [4Fe-4S] cluster.

It is found in the cytoplasm. The enzyme catalyses [[Fe-S] cluster scaffold protein carrying a second [4Fe-4S](2+) cluster] + N(6)-octanoyl-L-lysyl-[protein] + 2 oxidized [2Fe-2S]-[ferredoxin] + 2 S-adenosyl-L-methionine + 4 H(+) = [[Fe-S] cluster scaffold protein] + N(6)-[(R)-dihydrolipoyl]-L-lysyl-[protein] + 4 Fe(3+) + 2 hydrogen sulfide + 2 5'-deoxyadenosine + 2 L-methionine + 2 reduced [2Fe-2S]-[ferredoxin]. It participates in protein modification; protein lipoylation via endogenous pathway; protein N(6)-(lipoyl)lysine from octanoyl-[acyl-carrier-protein]: step 2/2. Its function is as follows. Catalyzes the radical-mediated insertion of two sulfur atoms into the C-6 and C-8 positions of the octanoyl moiety bound to the lipoyl domains of lipoate-dependent enzymes, thereby converting the octanoylated domains into lipoylated derivatives. This Koribacter versatilis (strain Ellin345) protein is Lipoyl synthase.